The chain runs to 243 residues: Venom nerve growth factor 2 (243 aa).

Residues 1–18 (MSMLCYTLIIAFLIGIWA) form the signal peptide. Residues 19 to 125 (APKSEDNVPL…TLNRNIRAKR (107 aa)) constitute a propeptide that is removed on maturation. Residues 47-66 (GLKTSRNTDQRHPAPKKAED) are compositionally biased toward basic and acidic residues. A disordered region spans residues 47–67 (GLKTSRNTDQRHPAPKKAEDQ). Cystine bridges form between C139-C204 and C192-C234. N-linked (GlcNAc...) asparagine glycosylation occurs at N148.

This sequence belongs to the NGF-beta family. Homodimer; non-covalently linked. Expressed by the venom gland.

The protein localises to the secreted. In terms of biological role, nerve growth factor is important for the development and maintenance of the sympathetic and sensory nervous systems. It stimulates division and differentiation of sympathetic and embryonic sensory neurons as well as basal forebrain cholinergic neurons in the brain. Its relevance in the snake venom is not clear. However, it has been shown to inhibit metalloproteinase-dependent proteolysis of platelet glycoprotein Ib alpha, suggesting a metalloproteinase inhibition to prevent metalloprotease autodigestion and/or protection against prey proteases. Binds a lipid between the two protein chains in the homodimer. The lipid-bound form promotes histamine relase from mouse mast cells, contrary to the lipid-free form. The polypeptide is Venom nerve growth factor 2 (Pseudonaja textilis (Eastern brown snake)).